Consider the following 113-residue polypeptide: Ig heavy chain V-III region E109 (113 aa).

Residues 1-113 form the Ig-like domain; that stretch reads EVKLEESGGG…YWGQGTLVTV (113 aa). Cysteine 22 and cysteine 98 are oxidised to a cystine.

The chain is Ig heavy chain V-III region E109 from Mus musculus (Mouse).